The sequence spans 540 residues: CTP synthase (540 aa).

The amidoligase domain stretch occupies residues 1–270 (MNNLTSTKFI…DTQILKHFNI (270 aa)). Ser-18 provides a ligand contact to CTP. Ser-18 serves as a coordination point for UTP. ATP-binding positions include 19 to 24 (SLGKGL) and Asp-76. Residues Asp-76 and Glu-144 each contribute to the Mg(2+) site. CTP-binding positions include 151–153 (DIE), 191–196 (KTKPTQ), and Lys-227. Residues 191-196 (KTKPTQ) and Lys-227 each bind UTP. Residues 295 to 537 (TIAIIGKYIK…VQASLNYQET (243 aa)) enclose the Glutamine amidotransferase type-1 domain. Gly-356 is a binding site for L-glutamine. The active-site Nucleophile; for glutamine hydrolysis is Cys-383. Residues 384–387 (MGMQ), Glu-407, and Arg-462 each bind L-glutamine. Active-site residues include His-510 and Glu-512.

The protein belongs to the CTP synthase family. In terms of assembly, homotetramer.

The catalysed reaction is UTP + L-glutamine + ATP + H2O = CTP + L-glutamate + ADP + phosphate + 2 H(+). It catalyses the reaction L-glutamine + H2O = L-glutamate + NH4(+). The enzyme catalyses UTP + NH4(+) + ATP = CTP + ADP + phosphate + 2 H(+). It functions in the pathway pyrimidine metabolism; CTP biosynthesis via de novo pathway; CTP from UDP: step 2/2. Its activity is regulated as follows. Allosterically activated by GTP, when glutamine is the substrate; GTP has no effect on the reaction when ammonia is the substrate. The allosteric effector GTP functions by stabilizing the protein conformation that binds the tetrahedral intermediate(s) formed during glutamine hydrolysis. Inhibited by the product CTP, via allosteric rather than competitive inhibition. In terms of biological role, catalyzes the ATP-dependent amination of UTP to CTP with either L-glutamine or ammonia as the source of nitrogen. Regulates intracellular CTP levels through interactions with the four ribonucleotide triphosphates. The sequence is that of CTP synthase from Ehrlichia ruminantium (strain Welgevonden).